The primary structure comprises 1610 residues: Voltage-dependent L-type calcium channel subunit alpha-1D (1610 aa).

Residues 1–99 (MMMMMMKKMQ…SKKQGNSSNS (99 aa)) are disordered. Residues 1–125 (MMMMMMKKMQ…RACISIVEWK (125 aa)) are Cytoplasmic-facing. Over residues 37–51 (GPTSQPNSSKQTVLS) the composition is skewed to polar residues. The segment covering 53–66 (QAAIDAARQAKAAQ) has biased composition (low complexity). The segment covering 81–92 (QRKRQQYAKSKK) has biased composition (basic residues). The I repeat unit spans residues 112-408 (NPIRRACISI…LVLGVLSGEF (297 aa)). Residues 126 to 144 (PFDIFILLAIFANCVALAI) traverse the membrane as a helical segment. Over 145-162 (YIPFPEDDSNSTNHNLEK) the chain is Extracellular. Asparagine 154 carries an N-linked (GlcNAc...) asparagine glycan. Residues 163–182 (VEYAFLIIFTVETFLKIIAY) form a helical membrane-spanning segment. The Cytoplasmic segment spans residues 183–194 (GLLLHPNAYVRN). A helical transmembrane segment spans residues 195–213 (GWNLLDFVIVIVGLFSVIL). The Extracellular portion of the chain corresponds to 214-234 (EQLTKETEGGNHSSGKSGGFD). Asparagine 224 carries an N-linked (GlcNAc...) asparagine glycan. The chain crosses the membrane as a helical span at residues 235 to 253 (VKALRAFRVLRPLRLVSGV). Residues 254–272 (PSLQVVLNSIIKAMVPLLH) are Cytoplasmic-facing. Residues 273 to 292 (IALLVLFVIIIYAIIGLELF) form a helical membrane-spanning segment. The Extracellular segment spans residues 293–380 (IGKMHKTCFF…WMNDAMGFEL (88 aa)). N-linked (GlcNAc...) asparagine glycosylation is present at asparagine 328. Glutamate 363 is a Ca(2+) binding site. The helical transmembrane segment at 381 to 405 (PWVYFVSLVIFGSFFVLNLVLGVLS) threads the bilayer. Residues 406–522 (GEFSKEREKA…RRCRAAVKSV (117 aa)) are Cytoplasmic-facing. Residues 428–445 (EQLEEDLKGYLDWITQAE) form a binding to the beta subunit region. Residues 448–487 (DPENEEEGGEEGKRNTSMPTSETESVNTENVSGEGETQGS) form a disordered region. Polar residues predominate over residues 462–487 (NTSMPTSETESVNTENVSGEGETQGS). The II repeat unit spans residues 508–754 (NRFNRRRCRA…VFLAIAVDNL (247 aa)). A helical transmembrane segment spans residues 523-542 (TFYWLVIVLVFLNTLTISSE). At 543 to 557 (HYNQPDWLTQIQDIA) the chain is on the extracellular side. Residues 558–576 (NKVLLALFTCEMLVKMYSL) traverse the membrane as a helical segment. Residues 577–584 (GLQAYFVS) are Cytoplasmic-facing. Residues 585-603 (LFNRFDCFVVCGGITETIL) form a helical membrane-spanning segment. Topologically, residues 604–613 (VELELMSPLG) are extracellular. The helical transmembrane segment at 614–632 (VSVFRCVRLLRIFKVTRHW) threads the bilayer. Residues 633–651 (TSLSNLVASLLNSMKSIAS) lie on the Cytoplasmic side of the membrane. A helical transmembrane segment spans residues 652-672 (LLLLLFLFIIIFSLLGMQLFG). Residues 673–726 (GKFNFDETQTKRSTFDNFPQALLTVFQILTGEDWNAVMYDGIMAYGGPSSSGMI) are Extracellular-facing. A Ca(2+)-binding site is contributed by glutamate 704. The chain crosses the membrane as a helical span at residues 727–751 (VCIYFIILFICGNYILLNVFLAIAV). At 752–884 (DNLADAESLN…VGCHKLINHH (133 aa)) the chain is on the cytoplasmic side. The span at 765-789 (KEEAEEKERKKIARKESLENKKNNK) shows a compositional bias: basic and acidic residues. Residues 765-846 (KEEAEEKERK…VPAGPRPRRI (82 aa)) form a disordered region. Over residues 790–801 (PEVNQIANSDNK) the composition is skewed to polar residues. Positions 824-836 (VGEEEEEEEEEPE) are enriched in acidic residues. The stretch at 871 to 1153 (NPIRVGCHKL…IFVGFVIVTF (283 aa)) is one III repeat. A helical transmembrane segment spans residues 885 to 903 (IFTNLILVFIMLSSAALAA). Residues 904–919 (EDPIRSHSFRNTILGY) lie on the Extracellular side of the membrane. The chain crosses the membrane as a helical span at residues 920-939 (FDYAFTAIFTVEILLKMTTF). Residues 940 to 951 (GAFLHKGAFCRN) are Cytoplasmic-facing. A helical membrane pass occupies residues 952–970 (YFNLLDMLVVGVSLVSFGI). Residues 971–976 (QSSAIS) lie on the Extracellular side of the membrane. Residues 977-996 (VVKILRVLRVLRPLRAINRA) form a helical membrane-spanning segment. The Cytoplasmic segment spans residues 997–1015 (KGLKHVVQCVFVAIRTIGN). A helical transmembrane segment spans residues 1016–1035 (IMIVTTLLQFMFACIGVQLF). Over 1036–1125 (KGKFYRCTDE…AGPVYNHRVE (90 aa)) the chain is Extracellular. Positions 1073-1163 (RIWQNSDFNF…QEQGEKEYKN (91 aa)) are dihydropyridine binding. A Ca(2+)-binding site is contributed by glutamate 1099. The chain crosses the membrane as a helical span at residues 1126–1146 (ISIFFIIYIIIVAFFMMNIFV). Over 1147–1203 (GFVIVTFQEQGEKEYKNCELDKNQRQCVEYALKARPLRRYIPKNPYQYKFWYVVNSS) the chain is Cytoplasmic. One copy of the IV repeat lies at 1190 to 1465 (NPYQYKFWYV…LFVAVIMDNF (276 aa)). Residues 1204 to 1222 (PFEYMMFVLIMLNTLCLAM) form a helical membrane-spanning segment. Residues 1223-1237 (QHYEQSKMFNDAMDI) are Extracellular-facing. The helical transmembrane segment at 1238–1257 (LNMVFTGVFTVEMVLKVIAF) threads the bilayer. Topologically, residues 1258–1264 (KPKGYFS) are cytoplasmic. The helical transmembrane segment at 1265–1286 (DAWNTFDSLIVIGSIIDVALSE) threads the bilayer. At 1287-1311 (ADPTESESLPLPTATPGNSEESNRI) the chain is on the extracellular side. Residues 1312–1331 (SITFFRLFRVMRLVKLLSRG) form a helical membrane-spanning segment. The Cytoplasmic portion of the chain corresponds to 1332–1350 (EGIRTLLWTFIKSFQALPY). A helical transmembrane segment spans residues 1351-1370 (VALLIAMLFFIYAVIGMQMF). Residues 1371–1437 (GKVAMRDNNQ…GEEYTCGSNF (67 aa)) lie on the Extracellular side of the membrane. Residues 1418 to 1484 (LCDPDSDYNP…LGPHHLDEFK (67 aa)) are dihydropyridine binding. The segment at 1430–1473 (EYTCGSNFAIVYFISFYMLCAFLIINLFVAVIMDNFDYLTRDWS) is phenylalkylamine binding. Residues 1438–1462 (AIVYFISFYMLCAFLIINLFVAVIM) form a helical membrane-spanning segment. The Cytoplasmic segment spans residues 1463-1610 (DNFDYLTRDW…CFLSPSRSRS (148 aa)).

Belongs to the calcium channel alpha-1 subunit (TC 1.A.1.11) family. CACNA1D subfamily. Voltage-dependent calcium channels are multisubunit complexes, consisting of alpha-1, alpha-2, beta and delta subunits in a 1:1:1:1 ratio. The channel activity is directed by the pore-forming and voltage-sensitive alpha-1 subunit. In many cases, this subunit is sufficient to generate voltage-sensitive calcium channel activity. The auxiliary subunits beta and alpha-2/delta linked by a disulfide bridge regulate the channel activity. Interacts with RIMBP2. Interacts with CABP1 and CABP4, resulting in a near elimination of calcium-dependent inactivation of the channel. Expressed in brain, heart and skeletal muscle.

The protein localises to the membrane. The enzyme catalyses Ca(2+)(in) = Ca(2+)(out). Voltage-sensitive calcium channels (VSCC) mediate the entry of calcium ions into excitable cells and are also involved in a variety of calcium-dependent processes, including muscle contraction, hormone or neurotransmitter release, gene expression, cell motility, cell division and cell death. The isoform alpha-1D gives rise to L-type calcium currents. Long-lasting (L-type) calcium channels belong to the 'high-voltage activated' (HVA) group. They are blocked by dihydropyridines (DHP), phenylalkylamines, and by benzothiazepines. The polypeptide is Voltage-dependent L-type calcium channel subunit alpha-1D (CACNA1D) (Mesocricetus auratus (Golden hamster)).